The following is a 243-amino-acid chain: Outer membrane protein A (243 aa).

Beta stranded transmembrane passes span 1 to 8 (LTAKLGYP), 13 to 21 (LDIYTRLGG), 47 to 56 (PVFAGGLEWA), 61 to 68 (IATRLEYQ), and 87 to 95 (LLSVGVSYR). 4 repeat units span residues 107-108 (AP), 109-110 (AP), 111-112 (AP), and 113-114 (AP). A 4 X 2 AA tandem repeats of A-P region spans residues 107–114 (APAPAPAP). Positions 116–243 (VQTKHFTLKS…RRVEIEVKGI (128 aa)) constitute an OmpA-like domain. An intrachain disulfide couples Cys217 to Cys229.

This sequence belongs to the outer membrane OOP (TC 1.B.6) superfamily. OmpA family. Monomer and homodimer.

It is found in the cell outer membrane. With TolR probably plays a role in maintaining the position of the peptidoglycan cell wall in the periplasm. Acts as a porin with low permeability that allows slow penetration of small solutes; an internal gate slows down solute passage. In Atlantibacter hermannii (Escherichia hermannii), this protein is Outer membrane protein A.